The sequence spans 29 residues: YCQKFLWTCDTERKCCEDMVCELWCKLEK.

3 cysteine pairs are disulfide-bonded: cysteine 2–cysteine 16, cysteine 9–cysteine 21, and cysteine 15–cysteine 25.

This sequence belongs to the neurotoxin 30 (phrixotoxin) family. Expressed by the venom gland.

The protein resides in the secreted. In terms of biological role, insect-selective neurotoxin that potently blocks insect calcium-activated potassium (BKCa) channels (Slo-type) in cockroach dorsal unpaired median (DUM) neurons (IC(50)=3.7 nM). This occurs in the absence of any shifts in the voltage dependence of activation. At high concentrations (330 nM), it partially inhibits cockroach delayed-rectifier potassium channels (Kv) currents. May interact with the turret and/or loop region of the external entrance to the channel and does not project deeply into the pore of the channel. In vivo, does not show toxicity in mice after intracerebroventricular injection of up to 25 pmol/g (1.8 ug/20 g mouse). The polypeptide is Lambda-theraphotoxin-Ec2a (Eucratoscelus constrictus (African red-rump baboon spider)).